The chain runs to 152 residues: Superoxide dismutase [Cu-Zn] (152 aa).

Cu cation is bound by residues histidine 45, histidine 47, and histidine 62. An intrachain disulfide couples cysteine 56 to cysteine 145. Histidine 62, histidine 70, histidine 79, and aspartate 82 together coordinate Zn(2+). Histidine 119 serves as a coordination point for Cu cation.

Belongs to the Cu-Zn superoxide dismutase family. Homodimer. Cu cation serves as cofactor. Zn(2+) is required as a cofactor.

It localises to the cytoplasm. It catalyses the reaction 2 superoxide + 2 H(+) = H2O2 + O2. Destroys radicals which are normally produced within the cells and which are toxic to biological systems. This is Superoxide dismutase [Cu-Zn] (SODCC) from Spinacia oleracea (Spinach).